We begin with the raw amino-acid sequence, 293 residues long: Elongation factor Ts (293 aa).

An involved in Mg(2+) ion dislocation from EF-Tu region spans residues 80 to 83 (TDFV).

It belongs to the EF-Ts family.

It is found in the cytoplasm. Associates with the EF-Tu.GDP complex and induces the exchange of GDP to GTP. It remains bound to the aminoacyl-tRNA.EF-Tu.GTP complex up to the GTP hydrolysis stage on the ribosome. This chain is Elongation factor Ts, found in Staphylococcus aureus (strain Newman).